We begin with the raw amino-acid sequence, 155 residues long: uncharacterized protein (155 aa).

Belongs to the IIV-6 145L family.

This is an uncharacterized protein from Acheta domesticus (House cricket).